A 218-amino-acid chain; its full sequence is Thiopurine S-methyltransferase (218 aa).

Positions 10, 45, 66, and 123 each coordinate S-adenosyl-L-methionine.

This sequence belongs to the class I-like SAM-binding methyltransferase superfamily. TPMT family.

Its subcellular location is the cytoplasm. It catalyses the reaction S-adenosyl-L-methionine + a thiopurine = S-adenosyl-L-homocysteine + a thiopurine S-methylether.. The protein is Thiopurine S-methyltransferase of Pseudomonas fluorescens (strain SBW25).